A 156-amino-acid chain; its full sequence is SCP2 sterol-binding domain-containing protein 1 (156 aa).

Positions 44–156 constitute an SCP2 domain; that stretch reads NFSVFEDISQ…ERIFREWAKI (113 aa).

This is SCP2 sterol-binding domain-containing protein 1 (Scp2d1) from Mus musculus (Mouse).